We begin with the raw amino-acid sequence, 189 residues long: 3-isopropylmalate dehydratase small subunit (189 aa).

Belongs to the LeuD family. LeuD type 1 subfamily. Heterodimer of LeuC and LeuD.

The catalysed reaction is (2R,3S)-3-isopropylmalate = (2S)-2-isopropylmalate. The protein operates within amino-acid biosynthesis; L-leucine biosynthesis; L-leucine from 3-methyl-2-oxobutanoate: step 2/4. In terms of biological role, catalyzes the isomerization between 2-isopropylmalate and 3-isopropylmalate, via the formation of 2-isopropylmaleate. This chain is 3-isopropylmalate dehydratase small subunit, found in Francisella philomiragia subsp. philomiragia (strain ATCC 25017 / CCUG 19701 / FSC 153 / O#319-036).